Reading from the N-terminus, the 322-residue chain is Ribose-phosphate pyrophosphokinase 1 (322 aa).

ATP is bound by residues 39–41 (DGE) and 98–99 (RQ). Mg(2+)-binding residues include His132 and Asp173. Lys196 is a catalytic residue. Residues Arg198, Asp224, and 228 to 232 (DTAGT) contribute to the D-ribose 5-phosphate site.

The protein belongs to the ribose-phosphate pyrophosphokinase family. Class I subfamily. Homohexamer. Mg(2+) serves as cofactor.

The protein localises to the cytoplasm. It catalyses the reaction D-ribose 5-phosphate + ATP = 5-phospho-alpha-D-ribose 1-diphosphate + AMP + H(+). It functions in the pathway metabolic intermediate biosynthesis; 5-phospho-alpha-D-ribose 1-diphosphate biosynthesis; 5-phospho-alpha-D-ribose 1-diphosphate from D-ribose 5-phosphate (route I): step 1/1. In terms of biological role, involved in the biosynthesis of the central metabolite phospho-alpha-D-ribosyl-1-pyrophosphate (PRPP) via the transfer of pyrophosphoryl group from ATP to 1-hydroxyl of ribose-5-phosphate (Rib-5-P). The polypeptide is Ribose-phosphate pyrophosphokinase 1 (Streptococcus mutans serotype c (strain ATCC 700610 / UA159)).